Here is a 160-residue protein sequence, read N- to C-terminus: Transcriptional repressor NrdR (160 aa).

The span at 1 to 11 shows a compositional bias: polar residues; sequence MRCPNCNSLDT. The interval 1-20 is disordered; that stretch reads MRCPNCNSLDTQVKDSRPTE. A zinc finger spans residues 3–34; it reads CPNCNSLDTQVKDSRPTEDSSVIRRRRVCIAC. The ATP-cone domain maps to 49 to 139; sequence LTVIKRNGRR…VYRNFREAKD (91 aa).

It belongs to the NrdR family. Zn(2+) is required as a cofactor.

In terms of biological role, negatively regulates transcription of bacterial ribonucleotide reductase nrd genes and operons by binding to NrdR-boxes. The polypeptide is Transcriptional repressor NrdR (Rhodopseudomonas palustris (strain BisB5)).